An 83-amino-acid polypeptide reads, in one-letter code: Small ribosomal subunit protein eS21 (83 aa).

Residue methionine 1 is modified to N-acetylmethionine. Lysine 41 participates in a covalent cross-link: Glycyl lysine isopeptide (Lys-Gly) (interchain with G-Cter in SUMO2). Lysine 81 is modified (N6-acetyllysine).

It belongs to the eukaryotic ribosomal protein eS21 family. As to quaternary structure, component of the 40S small ribosomal subunit.

The protein localises to the cytoplasm. Its subcellular location is the cytosol. The protein resides in the rough endoplasmic reticulum. In terms of biological role, component of the small ribosomal subunit. The ribosome is a large ribonucleoprotein complex responsible for the synthesis of proteins in the cell. This chain is Small ribosomal subunit protein eS21 (RPS21), found in Sus scrofa (Pig).